Here is a 145-residue protein sequence, read N- to C-terminus: UPF0735 ACT domain-containing protein CLD_1535 (145 aa).

The region spanning 69–144 (TIGLLLGHER…NVIKVDLIAM (76 aa)) is the ACT domain.

This sequence belongs to the UPF0735 family.

The protein is UPF0735 ACT domain-containing protein CLD_1535 of Clostridium botulinum (strain Okra / Type B1).